A 175-amino-acid polypeptide reads, in one-letter code: Large ribosomal subunit protein uL10 (175 aa).

Belongs to the universal ribosomal protein uL10 family. Part of the ribosomal stalk of the 50S ribosomal subunit. The N-terminus interacts with L11 and the large rRNA to form the base of the stalk. The C-terminus forms an elongated spine to which L12 dimers bind in a sequential fashion forming a multimeric L10(L12)X complex.

In terms of biological role, forms part of the ribosomal stalk, playing a central role in the interaction of the ribosome with GTP-bound translation factors. This Prochlorococcus marinus (strain MIT 9301) protein is Large ribosomal subunit protein uL10.